The primary structure comprises 753 residues: Enhancer of polycomb-like protein 1 (753 aa).

Disordered regions lie at residues 1–75 (MAAA…RDLH) and 429–490 (VRTE…LPPA). Polar residues predominate over residues 46–71 (LDSNELEPSQVHHLNSNASSSSTQQP). The segment covering 429–449 (VRTEDEEREKKREKKKQDQEL) has biased composition (basic and acidic residues). Positions 450-463 (ALKQQQALQQQQQQ) are enriched in low complexity.

Belongs to the enhancer of polycomb family. In terms of assembly, component of the NuA4 histone acetyltransferase complex.

The protein localises to the nucleus. In terms of biological role, component of the NuA4 histone acetyltransferase complex which is involved in transcriptional activation of selected genes principally by acetylation of nucleosomal histone H4 and H2A. The NuA4 complex is also involved in DNA repair. Involved in gene silencing by neighboring heterochromatin, blockage of the silencing spreading along the chromosome, and required for cell cycle progression through G2/M. This Candida albicans (strain SC5314 / ATCC MYA-2876) (Yeast) protein is Enhancer of polycomb-like protein 1 (EPL1).